Consider the following 100-residue polypeptide: Urease subunit gamma (100 aa).

This sequence belongs to the urease gamma subunit family. Heterotrimer of UreA (gamma), UreB (beta) and UreC (alpha) subunits. Three heterotrimers associate to form the active enzyme.

It is found in the cytoplasm. The enzyme catalyses urea + 2 H2O + H(+) = hydrogencarbonate + 2 NH4(+). Its pathway is nitrogen metabolism; urea degradation; CO(2) and NH(3) from urea (urease route): step 1/1. The chain is Urease subunit gamma from Escherichia coli O157:H7 (strain EC4115 / EHEC).